The chain runs to 378 residues: Anhydro-N-acetylmuramic acid kinase 2 (378 aa).

14-22 (GTVLDGNID) contacts ATP.

It belongs to the anhydro-N-acetylmuramic acid kinase family.

It catalyses the reaction 1,6-anhydro-N-acetyl-beta-muramate + ATP + H2O = N-acetyl-D-muramate 6-phosphate + ADP + H(+). Its pathway is amino-sugar metabolism; 1,6-anhydro-N-acetylmuramate degradation. It functions in the pathway cell wall biogenesis; peptidoglycan recycling. Catalyzes the specific phosphorylation of 1,6-anhydro-N-acetylmuramic acid (anhMurNAc) with the simultaneous cleavage of the 1,6-anhydro ring, generating MurNAc-6-P. Is required for the utilization of anhMurNAc either imported from the medium or derived from its own cell wall murein, and thus plays a role in cell wall recycling. The chain is Anhydro-N-acetylmuramic acid kinase 2 from Jannaschia sp. (strain CCS1).